The following is a 198-amino-acid chain: Probable chemoreceptor glutamine deamidase CheD (198 aa).

It belongs to the CheD family.

It carries out the reaction L-glutaminyl-[protein] + H2O = L-glutamyl-[protein] + NH4(+). Functionally, probably deamidates glutamine residues to glutamate on methyl-accepting chemotaxis receptors (MCPs), playing an important role in chemotaxis. The sequence is that of Probable chemoreceptor glutamine deamidase CheD from Xanthomonas euvesicatoria pv. vesicatoria (strain 85-10) (Xanthomonas campestris pv. vesicatoria).